Here is a 230-residue protein sequence, read N- to C-terminus: MSALAGLVDKGLMAPDWAQALAPVDEQIAAMGRFLREELAAGRTYQPTGEWVFRAFQRPLADVRVLIVGQDPYPNPEHPIGLSFAVRGDVWPLPPSLVNIYTELRDDLGLMPPRHGDLTAWADQGVMLLNRSLTVRPGASNSHRGKGWEPITACAIEALVRRGGPLVAILWGSDARNLRPMLGQIPVVESPHPSPLSAYRGFFGSRPFSRANRLLVEQGGRAVDWALPME.

D71 serves as the catalytic Proton acceptor.

Belongs to the uracil-DNA glycosylase (UDG) superfamily. UNG family.

It localises to the cytoplasm. It carries out the reaction Hydrolyzes single-stranded DNA or mismatched double-stranded DNA and polynucleotides, releasing free uracil.. In terms of biological role, excises uracil residues from the DNA which can arise as a result of misincorporation of dUMP residues by DNA polymerase or due to deamination of cytosine. This Nocardioides sp. (strain ATCC BAA-499 / JS614) protein is Uracil-DNA glycosylase.